The primary structure comprises 445 residues: D-serine dehydratase (445 aa).

At Lys-118 the chain carries N6-(pyridoxal phosphate)lysine.

The protein belongs to the serine/threonine dehydratase family. DsdA subfamily. As to quaternary structure, monomer. Pyridoxal 5'-phosphate serves as cofactor.

The enzyme catalyses D-serine = pyruvate + NH4(+). In Serratia proteamaculans (strain 568), this protein is D-serine dehydratase.